We begin with the raw amino-acid sequence, 1003 residues long: Phosphatidylinositol 4,5-bisphosphate 5-phosphatase A (1003 aa).

Disordered regions lie at residues 1–110 and 147–414; these read MEGQ…AAKS and AMPR…QPTC. An RSXSXX motif 1 motif is present at residues 6–11; that stretch reads RSGSAR. Residues 11-24 show a composition bias toward low complexity; sequence RPGTRTGLGPLPGT. Position 56 is an asymmetric dimethylarginine; alternate (arginine 56). Position 56 is an omega-N-methylarginine; alternate (arginine 56). Arginine 65 bears the Omega-N-methylarginine mark. Arginine 76 is modified (asymmetric dimethylarginine). Residue arginine 83 is modified to Asymmetric dimethylarginine; alternate. The residue at position 83 (arginine 83) is an Omega-N-methylarginine; alternate. Over residues 160–174 the composition is skewed to polar residues; that stretch reads LTPTSRDQKQLSPTS. Serine 171 is subject to Phosphoserine. Positions 180–196 are enriched in low complexity; the sequence is ALATSGLSLALASQEQP. Residues 197 to 210 are compositionally biased toward pro residues; that stretch reads PQSPSSPSPVPSPV. The segment covering 284–294 has biased composition (basic and acidic residues); sequence ARPEAPRHSPE. Serine 292 and serine 325 each carry phosphoserine. Positions 338 to 348 are enriched in pro residues; sequence VPPPLPKPPRS. Residues 346-351 carry the SH3-binding motif; the sequence is PRSPSR. Low complexity-rich tracts occupy residues 349-361 and 390-413; these read PSRSPSRSPNRSP and QAQESPAAATTTTSPTSSWSAQPT. Positions 351-356 match the RSXSXX motif 2 motif; sequence RSPSRS. Positions 422 to 725 are catalytic; the sequence is ITVVTWNVGT…SDHKPVAAQF (304 aa). Positions 726–837 are required for ruffle localization; sequence ILQFAFRDDV…IGVTEPFQIS (112 aa). Positions 839 to 1003 are disordered; the sequence is PTSESASSST…LGLEEGGLGP (165 aa). A compositionally biased stretch (low complexity) spans 840–855; sequence TSESASSSTDSSGTSS. 2 consecutive short sequence motifs (RSXSXX motif) follow at residues 871 to 876 and 882 to 887; these read RSPSPG and RSRSPG. Serine 900 is subject to Phosphoserine. Low complexity-rich tracts occupy residues 907-919 and 927-943; these read SRSPSPQSRQLPR and SSSSRGSSEEGPSGLPG. The RSXSXX motif 5 signature appears at 908–913; it reads RSPSPQ. Serine 987 carries the post-translational modification Phosphoserine.

It belongs to the inositol 1,4,5-trisphosphate 5-phosphatase type II family.

The protein resides in the cytoplasm. It carries out the reaction 1D-myo-inositol 1,4,5-trisphosphate + H2O = 1D-myo-inositol 1,4-bisphosphate + phosphate. The enzyme catalyses 1D-myo-inositol 1,3,4,5-tetrakisphosphate + H2O = 1D-myo-inositol 1,3,4-trisphosphate + phosphate. The catalysed reaction is a 1,2-diacyl-sn-glycero-3-phospho-(1D-myo-inositol-4,5-bisphosphate) + H2O = a 1,2-diacyl-sn-glycero-3-phospho-(1D-myo-inositol 4-phosphate) + phosphate. Functionally, inositol 5-phosphatase, which converts inositol 1,4,5-trisphosphate to inositol 1,4-bisphosphate. Also converts phosphatidylinositol 4,5-bisphosphate to phosphatidylinositol 4-phosphate and inositol 1,3,4,5-tetrakisphosphate to inositol 1,3,4-trisphosphate in vitro. May be involved in modulation of the function of inositol and phosphatidylinositol polyphosphate-binding proteins that are present at membranes ruffles. The sequence is that of Phosphatidylinositol 4,5-bisphosphate 5-phosphatase A (Inpp5j) from Mus musculus (Mouse).